The sequence spans 143 residues: Transcriptional regulatory protein RosR (143 aa).

Residues 79-97 form a C2H3-type zinc finger; sequence CLECGGNFKSLKRHLMTHH.

The protein belongs to the ros/MucR family.

In Rhizobium etli (strain ATCC 51251 / DSM 11541 / JCM 21823 / NBRC 15573 / CFN 42), this protein is Transcriptional regulatory protein RosR (rosR).